We begin with the raw amino-acid sequence, 202 residues long: Transmembrane 4 L6 family member 4 (202 aa).

Residues Met-1 to Cys-9 are Cytoplasmic-facing. Residues Leu-10–Phe-30 form a helical membrane-spanning segment. Over Pro-31–Tyr-48 the chain is Extracellular. A helical transmembrane segment spans residues Phe-49 to Leu-69. Residues Gln-70–Thr-93 lie on the Cytoplasmic side of the membrane. The chain crosses the membrane as a helical span at residues Leu-94–Ile-114. Residues Asn-115 to Thr-158 lie on the Extracellular side of the membrane. Residue Asn-156 is glycosylated (N-linked (GlcNAc...) asparagine). The helical transmembrane segment at Leu-159–Ile-179 threads the bilayer. Topologically, residues Asn-180–Val-202 are cytoplasmic.

The protein belongs to the L6 tetraspanin family. In terms of tissue distribution, expressed in liver and testis. Up-regulated in regenerating liver after partial hepatectomy.

Its subcellular location is the membrane. In terms of biological role, regulates the adhesive and proliferative status of intestinal epithelial cells. Can mediate density-dependent cell proliferation. The sequence is that of Transmembrane 4 L6 family member 4 (Tm4sf4) from Rattus norvegicus (Rat).